Consider the following 510-residue polypeptide: Maturase K (510 aa).

The protein belongs to the intron maturase 2 family. MatK subfamily.

The protein localises to the plastid. The protein resides in the chloroplast. In terms of biological role, usually encoded in the trnK tRNA gene intron. Probably assists in splicing its own and other chloroplast group II introns. The chain is Maturase K from Spirodela intermedia (Intermediate duckweed).